We begin with the raw amino-acid sequence, 195 residues long: Ribonuclease HII (195 aa).

The 190-residue stretch at 6–195 folds into the RNase H type-2 domain; sequence SLIAGVDEVG…KSFISRLEIN (190 aa). Residues D12, E13, and D108 each coordinate a divalent metal cation.

It belongs to the RNase HII family. Mn(2+) serves as cofactor. It depends on Mg(2+) as a cofactor.

It is found in the cytoplasm. It carries out the reaction Endonucleolytic cleavage to 5'-phosphomonoester.. Its function is as follows. Endonuclease that specifically degrades the RNA of RNA-DNA hybrids. The polypeptide is Ribonuclease HII (Prochlorococcus marinus (strain NATL1A)).